Here is a 309-residue protein sequence, read N- to C-terminus: Pyridoxal 5'-phosphate synthase subunit PDX1.3 (309 aa).

The residue at position 1 (Met1) is an N-acetylmethionine. Asp40 provides a ligand contact to D-ribose 5-phosphate. The Schiff-base intermediate with D-ribose 5-phosphate role is filled by Lys97. Position 169 (Gly169) interacts with D-ribose 5-phosphate. Residue Arg181 coordinates D-glyceraldehyde 3-phosphate. D-ribose 5-phosphate contacts are provided by residues Gly230 and Gly251 to Ser252.

It belongs to the PdxS/SNZ family. As to quaternary structure, homodimer or heterodimer with PDX1.1 or PDX1.2. Interacts with PDX2. As to expression, expressed in cotyledons, rapidly dividing root stele tissues, stems, leaves, flowers, mature pollen, and siliques.

It localises to the cytoplasm. Its subcellular location is the cell membrane. The protein resides in the membrane. It carries out the reaction aldehydo-D-ribose 5-phosphate + D-glyceraldehyde 3-phosphate + L-glutamine = pyridoxal 5'-phosphate + L-glutamate + phosphate + 3 H2O + H(+). Its pathway is cofactor biosynthesis; pyridoxal 5'-phosphate biosynthesis. Catalyzes the formation of pyridoxal 5'-phosphate from ribose 5-phosphate (RBP), glyceraldehyde 3-phosphate (G3P) and ammonia. The ammonia is provided by PDX2. Can also use ribulose 5-phosphate and dihydroxyacetone phosphate as substrates, resulting from enzyme-catalyzed isomerization of RBP and G3P, respectively. Also plays an indirect role in resistance to singlet oxygen-generating photosensitizers. This is Pyridoxal 5'-phosphate synthase subunit PDX1.3 (PDX13) from Arabidopsis thaliana (Mouse-ear cress).